The following is a 323-amino-acid chain: Protease Do-like 5, chloroplastic (323 aa).

The transit peptide at 1–28 directs the protein to the chloroplast; it reads MTMALASSKAFSSIFNTLSPINQSKFVL. A thylakoid-targeting transit peptide spans 29 to 73; sequence ACSGSNHVDVIDRRRRIMIFGSSLALTSSLLGSNQQRLPMESAIA. Residues His147, Asp188, and Ser266 each act as charge relay system in the active site. The segment at 186–283 is serine protease; sequence DNDLAVLKIE…YGHTIGVNTA (98 aa).

This sequence belongs to the peptidase S1C family.

It is found in the plastid. The protein resides in the chloroplast thylakoid lumen. Probable serine protease. The polypeptide is Protease Do-like 5, chloroplastic (DEGP5) (Arabidopsis thaliana (Mouse-ear cress)).